A 3432-amino-acid chain; its full sequence is Hybrid signal transduction histidine kinase G (3432 aa).

3 stretches are compositionally biased toward low complexity: residues 44 to 68, 76 to 90, and 126 to 145; these read HFSNSVLNQTTTTTTTTTTTTTTTN, SQLQAQLQSQSQQNN, and QPQQQQQQQASNKSKLSQKQ. Disordered stretches follow at residues 44–109 and 124–240; these read HFSN…TNSS and DDQP…HNIN. Residues 146–157 are compositionally biased toward polar residues; the sequence is TSQLNISGNNSG. 2 stretches are compositionally biased toward low complexity: residues 165–177 and 187–238; these read TISNSNNSINFIH and KTPI…NNHN. In terms of domain architecture, Protein kinase spans 263-792; that stretch reads LSFKHGYNSG…YGLKKDLEMF (530 aa). ATP contacts are provided by residues 269–277 and Lys305; that span reads YNSGLGGNF. Residues 399-419 show a composition bias toward low complexity; it reads NNNNNNNNSYNNNYNNNNNNN. Disordered stretches follow at residues 399 to 426 and 443 to 542; these read NNNNNNNNSYNNNYNNNNNNNGQVTSPI and FQLN…STPL. Positions 443 to 467 are enriched in polar residues; that stretch reads FQLNSSTNSTGSPLIITSQPMPFQL. Residues 468 to 479 are compositionally biased toward low complexity; that stretch reads NSNSNTTASSSS. The span at 480–490 shows a compositional bias: polar residues; sequence PITHSNLNTAI. Residues 491-508 show a composition bias toward low complexity; that stretch reads TSTTTSNSNSNNNSNNNN. The span at 509–525 shows a compositional bias: gly residues; the sequence is SGGGGGGGGGGGGGGGT. The active-site Proton acceptor; for protein kinase activity is Asp585. The AAA stretch occupies residues 863–1121; it reads GKEFIIVSGL…TMKIVLKNLD (259 aa). An ATP-binding site is contributed by 871–878; sequence GLSGVGKT. 2 disordered regions span residues 1040–1077 and 1261–1290; these read NNFSINNNNNNNNGCNNNNNNNNNNINNNNNNNNNNNI and TTTTNNNTTNNTNNNNTNNNNNNTNGNNSD. Positions 1261–1288 are enriched in low complexity; sequence TTTTNNNTTNNTNNNNTNNNNNNTNGNN. 2 helical membrane-spanning segments follow: residues 1567–1587 and 1599–1619; these read VMVIMMPSLYLNNLNVLTLLL and ISSWSSTAFAMFGMVVSIGHF. One copy of the TPR repeat lies at 1965-1998; it reads SQLMLAKAEFERINGNFEQAMEYFSEAISLAQQF. 2 disordered regions span residues 2071–2095 and 2299–2349; these read EYSNNNNNNNSNNNNNNANQSQASI and GYNN…NNNK. Low complexity predominate over residues 2073 to 2095; it reads SNNNNNNNSNNNNNNANQSQASI. The region spanning 2215–2465 is the GAF domain; it reads YFDRLLKRLM…SNARLFIKVN (251 aa). A Histidine kinase domain is found at 2491 to 2769; that stretch reads NMSHEMRTPL…TFHFCVELGK (279 aa). Position 2494 is a phosphohistidine; by autocatalysis (His2494). A compositionally biased stretch (low complexity) spans 2637–2648; the sequence is TTTNNKKQLNTD. Disordered stretches follow at residues 2637 to 2673, 2785 to 2815, 2917 to 3030, 3134 to 3160, and 3247 to 3281; these read TTTNNKKQLNTDNDGDDDDDDDNENLDENNEDTSIDL, LLNNNNNNNNNNNNNNNNNNNNNNNNNNNNN, LSPK…NNNS, NNNINNINNNNNKSNSPIPEDSKHSQY, and NSISTTSHSSTSTSSSSSSSSSSSSSLSSTTTITT. Over residues 2649–2673 the composition is skewed to acidic residues; sequence NDGDDDDDDDNENLDENNEDTSIDL. Composition is skewed to low complexity over residues 2787-2815, 2935-3029, and 3134-3145; these read NNNNNNNNNNNNNNNNNNNNNNNNNNNNN, LSSS…HNNN, and NNNINNINNNNN. The Response regulatory domain occupies 3305 to 3424; it reads KILIVEDNEM…DLRYVINRYG (120 aa). The residue at position 3356 (Asp3356) is a 4-aspartylphosphate.

Belongs to the protein kinase superfamily. Ser/Thr protein kinase family. In terms of processing, activation probably requires transfer of a phosphate group between a histidine in the kinase core (transmitter) domain and an aspartate of the receiver domain.

It is found in the membrane. The enzyme catalyses ATP + protein L-histidine = ADP + protein N-phospho-L-histidine.. The catalysed reaction is L-seryl-[protein] + ATP = O-phospho-L-seryl-[protein] + ADP + H(+). It carries out the reaction L-threonyl-[protein] + ATP = O-phospho-L-threonyl-[protein] + ADP + H(+). Acts as a receptor histidine kinase for a signal transduction pathway. This protein undergoes an ATP-dependent autophosphorylation at a conserved histidine residue in the kinase core, and a phosphoryl group is then transferred to a conserved aspartate residue in the receiver domain. This chain is Hybrid signal transduction histidine kinase G (dhkG), found in Dictyostelium discoideum (Social amoeba).